Consider the following 169-residue polypeptide: Peptide methionine sulfoxide reductase MsrA (169 aa).

The active site involves Cys-10.

Belongs to the MsrA Met sulfoxide reductase family.

The enzyme catalyses L-methionyl-[protein] + [thioredoxin]-disulfide + H2O = L-methionyl-(S)-S-oxide-[protein] + [thioredoxin]-dithiol. It carries out the reaction [thioredoxin]-disulfide + L-methionine + H2O = L-methionine (S)-S-oxide + [thioredoxin]-dithiol. Functionally, has an important function as a repair enzyme for proteins that have been inactivated by oxidation. Catalyzes the reversible oxidation-reduction of methionine sulfoxide in proteins to methionine. The protein is Peptide methionine sulfoxide reductase MsrA of Streptococcus pyogenes serotype M6 (strain ATCC BAA-946 / MGAS10394).